The chain runs to 544 residues: MATEEIHSLYDTILILDFGSQYSHLITRRCRELNVYCEMLPCTQKISDLSWKPKGVILSGSPYSVYAPDAPHVDPEVFTLGVPILGICYGLQEIARVHGGTVDAHTHREYGYAKIEVVKTGKKEQDALFEGIEMEADGGLQVWMSHGDQLTSLPPNFVTIASTPTSPYTAVAHESKPIYGVQFHPEVSHSPKGKEVIAAFVKNVCSVRDGWSMESFIPKEIARIRQICGEKGQVIGAVSGGVDSTVAAKLMHEAIGDRFHAIMVDNGVLRKDEAKKVHKMLTVDLGVNLTVVDASELFLARLKGVEDPERKRKIIGNTFIEVFEAEAAKLEAAAEKELAEKGGEAKGKIEWLLQGTLYPDVIESISFKGPSATIKTHHNVGGLLEDMKLKLIEPLRELFKDEVRALGRLLNIPEHLVGRHPFPGPGLAIRILGEVTREQIAILQHADDIYIEEVRAAGLYDQISQAFVALLPVKAVGVAGDARTYDQVVAVRAVSTEDFMTADWFVFPPQVLKRISSRITNEVKGVNRVVYDITSKPPGTVEWL.

The region spanning 12–210 (TILILDFGSQ…VKNVCSVRDG (199 aa)) is the Glutamine amidotransferase type-1 domain. Residue Cys88 is the Nucleophile of the active site. Active-site residues include His184 and Glu186. One can recognise a GMPS ATP-PPase domain in the interval 211-419 (WSMESFIPKE…LNIPEHLVGR (209 aa)). ATP is bound at residue 239–245 (SGGVDST). XMP-binding residues include Arg312, Asp481, Lys536, and Glu542.

As to quaternary structure, homodimer. Also forms a small population of homotetramers. Mg(2+) is required as a cofactor.

It is found in the cytoplasm. It localises to the cytosol. It carries out the reaction XMP + L-glutamine + ATP + H2O = GMP + L-glutamate + AMP + diphosphate + 2 H(+). It functions in the pathway purine metabolism; GMP biosynthesis; GMP from XMP (L-Gln route): step 1/1. Functionally, catalyzes the conversion of xanthine monophosphate (XMP) to GMP in the presence of glutamine and ATP through an adenyl-XMP intermediate. This chain is GMP synthase [glutamine-hydrolyzing], found in Cryptococcus neoformans var. neoformans serotype D (strain JEC21 / ATCC MYA-565) (Filobasidiella neoformans).